The primary structure comprises 308 residues: Glutaminase (308 aa).

Substrate contacts are provided by Ser-66, Asn-117, Glu-161, Asn-168, Tyr-192, Tyr-244, and Val-262.

The protein belongs to the glutaminase family. Homotetramer.

The catalysed reaction is L-glutamine + H2O = L-glutamate + NH4(+). The protein is Glutaminase of Klebsiella pneumoniae subsp. pneumoniae (strain ATCC 700721 / MGH 78578).